A 357-amino-acid chain; its full sequence is MQQIQVNLGDRSYPIHIGLDLLKQQQTFQSLQSKKVFIVTNDVVAPLYLTQVKAALADCASVDVFVLPDGEKNKDLAHLEQIFSALLEKNYARDTTLLALGGGVIGDMTGFAAACYQRGVPFVQVPTTLLAQVDSSVGGKTAVNHPLGKNMIGAFYQPQCVIIDTQCLHSLPKAEFDAGMAEVIKYGIIWDAEFFLWLENNIAALKALDTQALTYAIAKCCAIKADIVSQDETEQGVRALLNLGHTFGHAIEAQMGYGNWLHGQAVAAGSVLAAKTALALGLLDALSVQRIENLFRAFDLPIDGPQSMAFSDYMRHMRRDKKVLASKIRLILPQAIGQAGIYSDVDEALLAQVINPS.

NAD(+) is bound by residues 69–74 (DGEKNK), 103–107 (GVIGD), 127–128 (TT), lysine 140, and lysine 149. Positions 182, 245, and 262 each coordinate Zn(2+).

The protein belongs to the sugar phosphate cyclases superfamily. Dehydroquinate synthase family. The cofactor is Co(2+). Zn(2+) is required as a cofactor. Requires NAD(+) as cofactor.

It localises to the cytoplasm. It catalyses the reaction 7-phospho-2-dehydro-3-deoxy-D-arabino-heptonate = 3-dehydroquinate + phosphate. The protein operates within metabolic intermediate biosynthesis; chorismate biosynthesis; chorismate from D-erythrose 4-phosphate and phosphoenolpyruvate: step 2/7. Catalyzes the conversion of 3-deoxy-D-arabino-heptulosonate 7-phosphate (DAHP) to dehydroquinate (DHQ). In Shewanella denitrificans (strain OS217 / ATCC BAA-1090 / DSM 15013), this protein is 3-dehydroquinate synthase.